We begin with the raw amino-acid sequence, 932 residues long: uncharacterized protein (932 aa).

Disordered regions lie at residues 26–120 (NINN…NMLT), 158–289 (MGIG…EEKK), 304–617 (NNNN…INHD), 635–720 (QQSQ…PPLV), and 802–863 (SVSS…FPLE). 2 stretches are compositionally biased toward low complexity: residues 41–105 (NNNI…IISS) and 163–241 (NNNN…YGNN). A compositionally biased stretch (polar residues) spans 242-253 (TPVNYIHNNSTP). Acidic residues predominate over residues 265-285 (SDEEDSVLYSSDDSEESDYEE). The segment covering 304–475 (NNNNINNNNM…NNNNNNNNNN (172 aa)) has biased composition (low complexity). Polar residues-rich tracts occupy residues 476 to 492 (ENYV…NTES) and 527 to 540 (DIPN…TKQQ). Over residues 548-590 (SPVYSPPNNLSPLSSPYLHHNSNNNSNNGGGNSNNNNTNFNYG) the composition is skewed to low complexity. Basic and acidic residues predominate over residues 606-617 (GERDPPHVINHD). Low complexity-rich tracts occupy residues 635–666 (QQSQ…PSSS), 696–707 (SPPNTSISSLSS), and 813–853 (NSSN…NNNS). The span at 854–863 (EPKKPKFPLE) shows a compositional bias: basic and acidic residues.

This is an uncharacterized protein from Dictyostelium discoideum (Social amoeba).